The following is a 159-amino-acid chain: Vasotocin-neurophysin VT (159 aa).

The signal sequence occupies residues 1 to 17; the sequence is TAPVPACFLCLLALSSA. A disulfide bridge connects residues C18 and C23. Residue G26 is modified to Glycine amide. Intrachain disulfides connect C39–C83, C42–C56, C50–C73, C57–C63, C90–C102, C96–C114, and C103–C108. The N-linked (GlcNAc...) asparagine glycan is linked to N129.

It belongs to the vasopressin/oxytocin family. In terms of processing, seven disulfide bonds are present in neurophysin.

It is found in the secreted. Its function is as follows. Vasotocin is an antidiuretic hormone. The protein is Vasotocin-neurophysin VT of Bufo japonicus (Japanese common toad).